Reading from the N-terminus, the 582-residue chain is Membrane protein insertase YidC (582 aa).

The chain crosses the membrane as a helical span at residues 3–23 (IQRALVITGIAVVSYLMIQAW). Residues 38–92 (QVAEQGNSSSSDSADLPSVQSQTDNSIPSAQSDNDLPSVSPADIAQPTPSSQRIE) are disordered. Low complexity predominate over residues 45–58 (SSSSDSADLPSVQS). Over residues 59-74 (QTDNSIPSAQSDNDLP) the composition is skewed to polar residues. The next 5 membrane-spanning stretches (helical) occupy residues 357–377 (TVDYGWLWFISQPIFALLVFL), 394–414 (GVGNWGVAIILLTLIIKAIFF), 464–484 (LGGCLPMLVQMPVFIALYYVL), 495–515 (FFLWINDLSVMDPYFVLPILM), and 541–561 (MPMIFAVFMLWFPAGLVLYWL).

This sequence belongs to the OXA1/ALB3/YidC family. Type 1 subfamily. Interacts with the Sec translocase complex via SecD. Specifically interacts with transmembrane segments of nascent integral membrane proteins during membrane integration.

Its subcellular location is the cell inner membrane. Required for the insertion and/or proper folding and/or complex formation of integral membrane proteins into the membrane. Involved in integration of membrane proteins that insert both dependently and independently of the Sec translocase complex, as well as at least some lipoproteins. Aids folding of multispanning membrane proteins. This is Membrane protein insertase YidC from Alcanivorax borkumensis (strain ATCC 700651 / DSM 11573 / NCIMB 13689 / SK2).